A 163-amino-acid polypeptide reads, in one-letter code: Urease accessory protein UreE (163 aa).

A disordered region spans residues 134 to 163 (EAGAYGGGHRHHHDDDAPSIRQPARLRIHE).

It belongs to the UreE family.

The protein localises to the cytoplasm. Functionally, involved in urease metallocenter assembly. Binds nickel. Probably functions as a nickel donor during metallocenter assembly. The protein is Urease accessory protein UreE of Methylobacillus flagellatus (strain ATCC 51484 / DSM 6875 / VKM B-1610 / KT).